The sequence spans 655 residues: p-hydroxybenzoic acid efflux pump subunit AaeB (655 aa).

A run of 10 helical transmembrane segments spans residues 13–33 (FAVK…HFQL), 38–58 (WAVL…GGEP), 69–89 (LRII…IAMI), 93–113 (LLMI…SSLV), 121–141 (WGLA…EPLL), 152–172 (EIVV…PRSI), 370–390 (LFWL…IAVV), 407–427 (FIYG…VIIP), 431–451 (QSML…GIEV), and 481–501 (LFLD…TVIL).

Belongs to the aromatic acid exporter ArAE (TC 2.A.85) family.

Its subcellular location is the cell inner membrane. Functionally, forms an efflux pump with AaeA. Could function as a metabolic relief valve, allowing to eliminate certain compounds when they accumulate to high levels in the cell. The sequence is that of p-hydroxybenzoic acid efflux pump subunit AaeB from Escherichia fergusonii (strain ATCC 35469 / DSM 13698 / CCUG 18766 / IAM 14443 / JCM 21226 / LMG 7866 / NBRC 102419 / NCTC 12128 / CDC 0568-73).